The chain runs to 307 residues: MPIKIPDTLPAFETLVQEGVRVMTETLAIRQDIRPLQIGLLNLMPNKIKTELQMARLVGASPLQVELSLIRIGGHKAKNTSEDHLLAFYQTWEEVKHRKFDGFIITGAPIELLPYEDVTYWPEMQEILDWTETNVHSTMNVCWGAMAAVYHFHGVPKYELKEKAFGVYRHRNLKPSSIYLNGFSDNFEVPVSRWTEVRRADIEKSESLEILMESSEMGVCLVHEKRGRRLYMFNHVEYDSTSLSDEYFRDVNAGVPIKMPHNYFPHNDPALAPQNRWRSHAHLLFGNWINEIYQTTPFDVEEIGTDL.

Cysteine 142 (acyl-thioester intermediate) is an active-site residue. The substrate site is built by lysine 163 and serine 192. Histidine 235 serves as the catalytic Proton acceptor. The active site involves glutamate 237. Arginine 249 is a binding site for substrate.

This sequence belongs to the MetA family.

The protein localises to the cytoplasm. It carries out the reaction L-homoserine + acetyl-CoA = O-acetyl-L-homoserine + CoA. Its pathway is amino-acid biosynthesis; L-methionine biosynthesis via de novo pathway; O-acetyl-L-homoserine from L-homoserine: step 1/1. Functionally, transfers an acetyl group from acetyl-CoA to L-homoserine, forming acetyl-L-homoserine. The polypeptide is Homoserine O-acetyltransferase (Rhizobium johnstonii (strain DSM 114642 / LMG 32736 / 3841) (Rhizobium leguminosarum bv. viciae)).